The following is a 238-amino-acid chain: tRNA (guanine-N(1)-)-methyltransferase (238 aa).

Residues Gly-109 and 129-134 (IGDFVL) contribute to the S-adenosyl-L-methionine site.

It belongs to the RNA methyltransferase TrmD family. Homodimer.

Its subcellular location is the cytoplasm. It carries out the reaction guanosine(37) in tRNA + S-adenosyl-L-methionine = N(1)-methylguanosine(37) in tRNA + S-adenosyl-L-homocysteine + H(+). Specifically methylates guanosine-37 in various tRNAs. This is tRNA (guanine-N(1)-)-methyltransferase from Exiguobacterium sp. (strain ATCC BAA-1283 / AT1b).